The primary structure comprises 114 residues: Protein S100-A9 (114 aa).

The residue at position 2 (T2) is a Blocked amino end (Thr). At C3 the chain carries S-nitrosocysteine; transient. 2 EF-hand domains span residues 12–47 and 54–89; these read IETI…DLQN and KNEK…LTWA. H20 serves as a coordination point for Zn(2+). Ca(2+)-binding residues include S23, L26, and H28. D30 contacts Zn(2+). 7 residues coordinate Ca(2+): T31, E36, D67, N69, D71, Q73, and E78. Positions 91 and 95 each coordinate Zn(2+). Positions 93–102 are enriched in basic and acidic residues; that stretch reads KMHEGDEGPG. The interval 93 to 114 is disordered; that stretch reads KMHEGDEGPGHHHKPGLGEGTP. H105 bears the Pros-methylhistidine mark. Phosphothreonine; by MAPK14 is present on T113.

In terms of assembly, homodimer. Preferentially exists as a heterodimer or heterotetramer with S100A8 known as calprotectin (S100A8/A9). S100A9 interacts with ATP2A2. S100A9 interacts with AGER, and with the heterodimeric complex formed by TLR4 and LY96 in the presence of calcium and/or zinc ions. S100A9 binds quinoline-3-carboxamides in the presence of calcium and/or zinc ions. S100A9 interacts with amyloid-beta protein 40. Calprotectin (S100A8/9) interacts with CEACAM3 and tubulin filaments in a calcium-dependent manner. Heterotetrameric calprotectin (S100A8/A9) interacts with ANXA6 and associates with tubulin filaments in activated monocytes. Calprotectin (S100A8/9) interacts with NCF2/P67PHOX, RAC1, RAC2, CYBA and CYBB. Calprotectin (S100A8/9) interacts with NOS2 to form the iNOS-S100A8/A9 transnitrosylase complex; induced by LDL(ox). Calprotectin (S100A8/9) interacts with CD69. Phosphorylated. Phosphorylation inhibits activation of tubulin polymerization. In terms of processing, S-nitrosylation of Cys-3 is implicated in LDL(ox)-induced S-nitrosylation of GAPDH at 'Cys-247' through a transnitrosylase mechanism involving a iNOS-S100A8/9 complex. Post-translationally, methylation at His-105 by METTL9 reduces zinc-binding without affecting heterodimerization with S100A8. Calprotectin (S100A8/9) is predominantly expressed in myeloid cells. Except for inflammatory conditions, the expression is restricted to a specific stage of myeloid differentiation since both proteins are expressed in circulating neutrophils and monocytes but are absent in normal tissue macrophages and lymphocytes. Under chronic inflammatory conditions, such as psoriasis and malignant disorders, also expressed in the epidermis. Found in high concentrations at local sites of inflammation or in the serum of patients with inflammatory diseases such as rheumatoid, cystic fibrosis, inflammatory bowel disease, Crohn's disease, giant cell arteritis, cystic fibrosis, Sjogren's syndrome, systemic lupus erythematosus, and progressive systemic sclerosis. Involved in the formation and deposition of amyloids in the aging prostate known as corpora amylacea inclusions. Strongly up-regulated in many tumors, including gastric, esophageal, colon, pancreatic, bladder, ovarian, thyroid, breast and skin cancers.

The protein resides in the secreted. The protein localises to the cytoplasm. Its subcellular location is the cytoskeleton. It is found in the cell membrane. Functionally, S100A9 is a calcium- and zinc-binding protein which plays a prominent role in the regulation of inflammatory processes and immune response. It can induce neutrophil chemotaxis, adhesion, can increase the bactericidal activity of neutrophils by promoting phagocytosis via activation of SYK, PI3K/AKT, and ERK1/2 and can induce degranulation of neutrophils by a MAPK-dependent mechanism. Predominantly found as calprotectin (S100A8/A9) which has a wide plethora of intra- and extracellular functions. The intracellular functions include: facilitating leukocyte arachidonic acid trafficking and metabolism, modulation of the tubulin-dependent cytoskeleton during migration of phagocytes and activation of the neutrophilic NADPH-oxidase. Also participates in regulatory T-cell differentiation together with CD69. Activates NADPH-oxidase by facilitating the enzyme complex assembly at the cell membrane, transferring arachidonic acid, an essential cofactor, to the enzyme complex and S100A8 contributes to the enzyme assembly by directly binding to NCF2/P67PHOX. The extracellular functions involve pro-inflammatory, antimicrobial, oxidant-scavenging and apoptosis-inducing activities. Its pro-inflammatory activity includes recruitment of leukocytes, promotion of cytokine and chemokine production, and regulation of leukocyte adhesion and migration. Acts as an alarmin or a danger associated molecular pattern (DAMP) molecule and stimulates innate immune cells via binding to pattern recognition receptors such as Toll-like receptor 4 (TLR4) and receptor for advanced glycation endproducts (AGER). Binding to TLR4 and AGER activates the MAP-kinase and NF-kappa-B signaling pathways resulting in the amplification of the pro-inflammatory cascade. Has antimicrobial activity towards bacteria and fungi and exerts its antimicrobial activity probably via chelation of Zn(2+) which is essential for microbial growth. Can induce cell death via autophagy and apoptosis and this occurs through the cross-talk of mitochondria and lysosomes via reactive oxygen species (ROS) and the process involves BNIP3. Can regulate neutrophil number and apoptosis by an anti-apoptotic effect; regulates cell survival via ITGAM/ITGB and TLR4 and a signaling mechanism involving MEK-ERK. Its role as an oxidant scavenger has a protective role in preventing exaggerated tissue damage by scavenging oxidants. Can act as a potent amplifier of inflammation in autoimmunity as well as in cancer development and tumor spread. Has transnitrosylase activity; in oxidatively-modified low-densitity lipoprotein (LDL(ox))-induced S-nitrosylation of GAPDH on 'Cys-247' proposed to transfer the NO moiety from NOS2/iNOS to GAPDH via its own S-nitrosylated Cys-3. The iNOS-S100A8/A9 transnitrosylase complex is proposed to also direct selective inflammatory stimulus-dependent S-nitrosylation of multiple targets such as ANXA5, EZR, MSN and VIM by recognizing a [IL]-x-C-x-x-[DE] motif. This is Protein S100-A9 from Homo sapiens (Human).